The following is a 277-amino-acid chain: Energy-coupling factor transporter ATP-binding protein EcfA1 (277 aa).

The region spanning 5 to 242 (VKVNNISFEY…IKMLKEIGLD (238 aa)) is the ABC transporter domain. 41-48 (GHNGSGKS) is a binding site for ATP.

The protein belongs to the ABC transporter superfamily. Energy-coupling factor EcfA family. In terms of assembly, forms a stable energy-coupling factor (ECF) transporter complex composed of 2 membrane-embedded substrate-binding proteins (S component), 2 ATP-binding proteins (A component) and 2 transmembrane proteins (T component).

The protein localises to the cell membrane. Its function is as follows. ATP-binding (A) component of a common energy-coupling factor (ECF) ABC-transporter complex. Unlike classic ABC transporters this ECF transporter provides the energy necessary to transport a number of different substrates. This Clostridioides difficile (strain 630) (Peptoclostridium difficile) protein is Energy-coupling factor transporter ATP-binding protein EcfA1.